The chain runs to 295 residues: Undecaprenyl-diphosphatase (295 aa).

7 helical membrane passes run 12–34, 50–70, 95–115, 120–140, 209–229, 243–263, and 272–292; these read IAIAILQGATELFPVSSLGHAVV, FLPFLVFLHLGTAAALLLYFW, IFMLLVVATLPAIVVGGLLEH, LFESAPIAAFFLVVNGGLLLF, AHFSFLIALPIILGATVLEVP, TAALAAVAAGITAWLSTAFLM, and WALKPFAFYCIIAGLGALAWL.

The protein belongs to the UppP family.

The protein localises to the cell inner membrane. The catalysed reaction is di-trans,octa-cis-undecaprenyl diphosphate + H2O = di-trans,octa-cis-undecaprenyl phosphate + phosphate + H(+). In terms of biological role, catalyzes the dephosphorylation of undecaprenyl diphosphate (UPP). Confers resistance to bacitracin. The polypeptide is Undecaprenyl-diphosphatase (Granulibacter bethesdensis (strain ATCC BAA-1260 / CGDNIH1)).